The sequence spans 417 residues: Inner membrane transport protein YnfM (417 aa).

The segment at 1-22 is disordered; sequence MSRTTTVDGAPASDTDKQSISQ. At 1 to 38 the chain is on the periplasmic side; sequence MSRTTTVDGAPASDTDKQSISQPNQFIKRGTPQFMRVT. A helical transmembrane segment spans residues 39–59; it reads LALFSAGLATFALLYCVQPIL. Topologically, residues 60–73 are cytoplasmic; the sequence is PVLSQEFGLTPANS. The chain crosses the membrane as a helical span at residues 74–94; it reads SISLSISTAMLAIGLLFTGPL. Residues 95 to 101 lie on the Periplasmic side of the membrane; the sequence is SDAIGRK. A helical transmembrane segment spans residues 102–122; sequence PVMVTALLLASICTLLSTMMT. At 123 to 125 the chain is on the cytoplasmic side; that stretch reads SWH. The helical transmembrane segment at 126–146 threads the bilayer; sequence GILIMRALIGLSLSGVAAVGM. At 147–152 the chain is on the periplasmic side; that stretch reads TYLSEE. Residues 153–173 form a helical membrane-spanning segment; it reads IHPSFVAFSMGLYISGNSIGG. Residues 174 to 190 are Cytoplasmic-facing; it reads MSGRLISGVFTDFFNWR. Residues 191–211 traverse the membrane as a helical segment; it reads IALAAIGCFALASALMFWKIL. At 212–241 the chain is on the periplasmic side; sequence PESRHFRPTSLRPKTLFINFRLHWRDRGLP. Residues 242–262 traverse the membrane as a helical segment; that stretch reads LLFAEGFLLMGSFVTLFNYIG. Over 263-264 the chain is Cytoplasmic; that stretch reads YR. The helical transmembrane segment at 265 to 285 threads the bilayer; the sequence is LMLSPWHVSQAVVGLLSLAYL. The Periplasmic segment spans residues 286-315; sequence TGTWSSPKAGTMTTRYGRGPVMLFSTGVML. The chain crosses the membrane as a helical span at residues 316-336; the sequence is FGLLMTLFSSLWLIFAGMLLF. The Cytoplasmic portion of the chain corresponds to 337 to 364; the sequence is SAGFFAAHSVASSWIGPRAKRAKGQASS. A helical membrane pass occupies residues 365–385; the sequence is LYLFSYYLGSSIAGTLGGVFW. At 386 to 387 the chain is on the periplasmic side; the sequence is HN. A helical transmembrane segment spans residues 388 to 408; sequence YGWNGVGAFIALMLVIALLVG. At 409 to 417 the chain is on the cytoplasmic side; sequence TRLHRRLHA.

It belongs to the major facilitator superfamily.

Its subcellular location is the cell inner membrane. This chain is Inner membrane transport protein YnfM (ynfM), found in Escherichia coli (strain K12).